We begin with the raw amino-acid sequence, 117 residues long: Large ribosomal subunit protein bL20 (117 aa).

The protein belongs to the bacterial ribosomal protein bL20 family.

Its function is as follows. Binds directly to 23S ribosomal RNA and is necessary for the in vitro assembly process of the 50S ribosomal subunit. It is not involved in the protein synthesizing functions of that subunit. This Neorickettsia sennetsu (strain ATCC VR-367 / Miyayama) (Ehrlichia sennetsu) protein is Large ribosomal subunit protein bL20.